Here is a 645-residue protein sequence, read N- to C-terminus: 1,4-alpha-glucan branching enzyme GlgB (645 aa).

Catalysis depends on aspartate 309, which acts as the Nucleophile. Glutamate 352 serves as the catalytic Proton donor. The tract at residues 619–645 (VKTRKGSKKQDGSKTKVRSNVTSRGKR) is disordered. Over residues 636-645 (RSNVTSRGKR) the composition is skewed to polar residues.

This sequence belongs to the glycosyl hydrolase 13 family. GlgB subfamily. Monomer.

The enzyme catalyses Transfers a segment of a (1-&gt;4)-alpha-D-glucan chain to a primary hydroxy group in a similar glucan chain.. It participates in glycan biosynthesis; glycogen biosynthesis. Functionally, catalyzes the formation of the alpha-1,6-glucosidic linkages in glycogen by scission of a 1,4-alpha-linked oligosaccharide from growing alpha-1,4-glucan chains and the subsequent attachment of the oligosaccharide to the alpha-1,6 position. The sequence is that of 1,4-alpha-glucan branching enzyme GlgB from Bacillus cereus (strain AH820).